We begin with the raw amino-acid sequence, 590 residues long: Melanophilin (590 aa).

A RabBD domain is found at 4–124 (RLDLSTLTDE…IGSLEWYYQH (121 aa)). An FYVE-type zinc finger spans residues 64–107 (CARCLQPYRLLLNSRRQCLECSLFVCKSCSHAHPEEQGWLCDPC). 5 disordered regions span residues 147–182 (GGGGSEPSLEEGNGDSEQTDEDGDLDTEARDQPLNS), 215–276 (SVPE…AELD), 311–335 (DTSDEDSIQGPRAASQHSKRRARTV), 361–472 (VLPP…SEIS), and 485–590 (GLTV…AQQP). Over residues 154-172 (SLEEGNGDSEQTDEDGDLD) the composition is skewed to acidic residues. Polar residues predominate over residues 215-238 (SVPESAHSLQSLSGEPYSEDTTSL). Residues 339-485 (QILELNKRMS…SRIAALRAAG (147 aa)) adopt a coiled-coil conformation. The span at 391 to 401 (LTSNISGSSTS) shows a compositional bias: low complexity. Basic and acidic residues predominate over residues 424-433 (GHMETQERNP).

Binds RAB27A that has been activated by GTP-binding via its N-terminus. Binds MYO5A via its C-terminal coiled coil domain. In terms of tissue distribution, highly expressed in embryos at day 7; not detectable at day 11. Highly expressed in adult stomach; detected at lower levels in kidney, lung, skin and small intestine. Detected in melanocytes.

It is found in the melanosome. Functionally, rab effector protein involved in melanosome transport. Serves as link between melanosome-bound RAB27A and the motor protein MYO5A. This chain is Melanophilin (Mlph), found in Mus musculus (Mouse).